We begin with the raw amino-acid sequence, 1574 residues long: DNA-directed RNA polymerase subunit beta' (1574 aa).

Residues C64, C66, C79, and C82 each contribute to the Zn(2+) site. Residues D590, D592, and D594 each contribute to the Mg(2+) site. C928, C1002, C1009, and C1012 together coordinate Zn(2+).

Belongs to the RNA polymerase beta' chain family. The RNAP catalytic core consists of 2 alpha, 1 beta, 1 beta' and 1 omega subunit. When a sigma factor is associated with the core the holoenzyme is formed, which can initiate transcription. The cofactor is Mg(2+). Zn(2+) serves as cofactor.

The catalysed reaction is RNA(n) + a ribonucleoside 5'-triphosphate = RNA(n+1) + diphosphate. DNA-dependent RNA polymerase catalyzes the transcription of DNA into RNA using the four ribonucleoside triphosphates as substrates. In Aquifex aeolicus (strain VF5), this protein is DNA-directed RNA polymerase subunit beta'.